Reading from the N-terminus, the 247-residue chain is Sensory rhodopsin-1 (247 aa).

At 1–4 (MTGA) the chain is on the extracellular side. The chain crosses the membrane as a helical span at residues 5–26 (VSAAYWIAAVAFLVGLGITAAL). Over 27 to 35 (YAKLGESED) the chain is Cytoplasmic. The helical transmembrane segment at 36 to 57 (RGRLAALAVIPGFAGLAYAGMA) threads the bilayer. Residues 58–71 (LGIGTVTVNGAELV) lie on the Extracellular side of the membrane. Residues 72–93 (GLRYVDWIVTTPLLVGFIGYVA) form a helical membrane-spanning segment. Over 94–96 (GAS) the chain is Cytoplasmic. Residues 97–119 (RRAIAGVMLADALMIAFGAGAVV) traverse the membrane as a helical segment. Residues 120–123 (TGGT) are Extracellular-facing. Residues 124–151 (LKWVLFGVSSIFHVTLFAYLYVVFPRAV) form a helical membrane-spanning segment. Residues 152–154 (PDD) are Cytoplasmic-facing. A helical transmembrane segment spans residues 155-182 (PMQRGLFSLLKNHVGLLWLAYPFVWLMG). The Extracellular segment spans residues 183–190 (PAGIGFTT). The chain crosses the membrane as a helical span at residues 191-223 (GVGAALTYAFLDVLAKVPYVYFFYARRQAFTDV). N6-(retinylidene)lysine is present on Lys-206. Over 224–247 (VSAATADREDATDAVGDGAPTAAD) the chain is Cytoplasmic.

It belongs to the archaeal/bacterial/fungal opsin family. As to quaternary structure, interacts with HTR-I.

The protein localises to the cell membrane. Functionally, involved in the control of phototaxis. Mediates both photoattractant (in the orange light) and photophobic (in the near UV light) responses. The signal is then transmitted to the sensory rhodopsin I transducer (HTR-I). The protein is Sensory rhodopsin-1 (sop1) of Halobacterium sp. (strain SG1).